The sequence spans 605 residues: Sorting nexin MVP1 (605 aa).

Disordered stretches follow at residues 113-147 (PMDF…LDDH) and 175-213 (EEQE…SGVW). A compositionally biased stretch (polar residues) spans 123 to 138 (SSINFSASTTGRSQTP). The segment covering 180–193 (LQQSQLSQSQLSRS) has biased composition (low complexity). In terms of domain architecture, PX spans 226–343 (ADSVTLAIVP…TFVTLRNDIS (118 aa)). Positions 264, 266, 290, and 309 each coordinate a 1,2-diacyl-sn-glycero-3-phospho-(1D-myo-inositol-3-phosphate).

This sequence belongs to the sorting nexin family.

Its subcellular location is the cytoplasm. The protein resides in the membrane. Its function is as follows. Required for vacuolar protein sorting. The sequence is that of Sorting nexin MVP1 (MVP1) from Yarrowia lipolytica (strain CLIB 122 / E 150) (Yeast).